We begin with the raw amino-acid sequence, 272 residues long: Methylesterase 8 (272 aa).

Residue S102 is the Acyl-ester intermediate of the active site. Residues D222 and H250 each act as charge relay system in the active site.

Belongs to the AB hydrolase superfamily. Methylesterase family.

Its function is as follows. Methylesterase shown to have carboxylesterase activity in vitro. This chain is Methylesterase 8, found in Arabidopsis thaliana (Mouse-ear cress).